The sequence spans 479 residues: Glutamate--tRNA ligase (479 aa).

The 'HIGH' region motif lies at 9 to 19 (PSPTGLFHIGT). The 'KMSKS' region motif lies at 248–252 (KLSKR). K251 contributes to the ATP binding site.

It belongs to the class-I aminoacyl-tRNA synthetase family. Glutamate--tRNA ligase type 1 subfamily. Monomer.

Its subcellular location is the cytoplasm. It carries out the reaction tRNA(Glu) + L-glutamate + ATP = L-glutamyl-tRNA(Glu) + AMP + diphosphate. Functionally, catalyzes the attachment of glutamate to tRNA(Glu) in a two-step reaction: glutamate is first activated by ATP to form Glu-AMP and then transferred to the acceptor end of tRNA(Glu). This is Glutamate--tRNA ligase from Prochlorococcus marinus (strain MIT 9215).